A 179-amino-acid chain; its full sequence is ATP-dependent protease subunit HslV (179 aa).

Threonine 8 is a catalytic residue. Residues glycine 163, cysteine 166, and threonine 169 each contribute to the Na(+) site.

This sequence belongs to the peptidase T1B family. HslV subfamily. A double ring-shaped homohexamer of HslV is capped on each side by a ring-shaped HslU homohexamer. The assembly of the HslU/HslV complex is dependent on binding of ATP.

The protein localises to the cytoplasm. The enzyme catalyses ATP-dependent cleavage of peptide bonds with broad specificity.. Allosterically activated by HslU binding. Its function is as follows. Protease subunit of a proteasome-like degradation complex believed to be a general protein degrading machinery. This chain is ATP-dependent protease subunit HslV, found in Solibacter usitatus (strain Ellin6076).